A 179-amino-acid polypeptide reads, in one-letter code: Large ribosomal subunit protein uL5 (179 aa).

The protein belongs to the universal ribosomal protein uL5 family. Part of the 50S ribosomal subunit; part of the 5S rRNA/L5/L18/L25 subcomplex. Contacts the 5S rRNA and the P site tRNA. Forms a bridge to the 30S subunit in the 70S ribosome.

Functionally, this is one of the proteins that bind and probably mediate the attachment of the 5S RNA into the large ribosomal subunit, where it forms part of the central protuberance. In the 70S ribosome it contacts protein S13 of the 30S subunit (bridge B1b), connecting the 2 subunits; this bridge is implicated in subunit movement. Contacts the P site tRNA; the 5S rRNA and some of its associated proteins might help stabilize positioning of ribosome-bound tRNAs. This is Large ribosomal subunit protein uL5 from Pseudomonas putida (strain W619).